The following is a 517-amino-acid chain: MFS-type transporter avaJ (517 aa).

Positions 1–12 are enriched in basic and acidic residues; the sequence is MTSPEHSEDERQ. The interval 1–28 is disordered; it reads MTSPEHSEDERQPLLTKPSGPDESQSGF. Residues 40–60 traverse the membrane as a helical segment; that stretch reads AMWLLPMYTLYAITAGSLIIP. N63 carries N-linked (GlcNAc...) asparagine glycosylation. 5 helical membrane-spanning segments follow: residues 103 to 123, 131 to 151, 161 to 181, 204 to 224, and 230 to 250; these read IYGT…LMGF, PILL…LAAL, WLLV…ATTA, AAFT…LSVF, and AYWL…LALP. N265 is a glycosylation site (N-linked (GlcNAc...) asparagine). The next 5 membrane-spanning stretches (helical) occupy residues 299-319, 338-358, 391-411, 442-462, and 476-496; these read MYIV…LVPL, FLTG…PLFM, LLLQ…LGVI, VLLG…PSGM, and ALFA…MFIG. N497 and N512 each carry an N-linked (GlcNAc...) asparagine glycan.

This sequence belongs to the major facilitator superfamily. TCR/Tet family.

The protein localises to the membrane. The protein operates within secondary metabolite biosynthesis. In terms of biological role, MFS-type transporter; part of the cluster that mediates the biosynthesis of a highly modified cyclo-arginine-tryptophan dipeptide (cRW). The chain is MFS-type transporter avaJ from Aspergillus versicolor.